The following is a 777-amino-acid chain: Glucocorticoid receptor (777 aa).

Over residues 1-14 (MDSKESLTPGKEEN) the composition is skewed to basic and acidic residues. The interval 1–22 (MDSKESLTPGKEENPSSVLTQE) is disordered. The segment at 1 to 420 (MDSKESLTPG…TATTGPPPKL (420 aa)) is modulating. Thr8 is subject to Phosphothreonine. Arg23 carries the post-translational modification Omega-N-methylarginine. Phosphoserine occurs at positions 45, 113, 134, and 141. Residues 130 to 182 (NRSTSVPENPKSSASSSVSAAPKEKEFPKTHSDVSSEQQNLKGQTGSNGGNVK) are disordered. Residues 134-150 (SVPENPKSSASSSVSAA) show a composition bias toward low complexity. Residues 151 to 163 (PKEKEFPKTHSDV) show a composition bias toward basic and acidic residues. The segment covering 164–174 (SSEQQNLKGQT) has biased composition (polar residues). Phosphoserine is present on residues Ser203, Ser211, and Ser226. Lys258 participates in a covalent cross-link: Glycyl lysine isopeptide (Lys-Gly) (interchain with G-Cter in SUMO2). Ser267 carries the post-translational modification Phosphoserine. Glycyl lysine isopeptide (Lys-Gly) (interchain with G-Cter in SUMO); alternate cross-links involve residues Lys277 and Lys293. Residues Lys277 and Lys293 each participate in a glycyl lysine isopeptide (Lys-Gly) (interchain with G-Cter in SUMO2); alternate cross-link. Residues 394–414 (SSPSMRPDVSSPPSSSSTATT) are compositionally biased toward low complexity. The tract at residues 394–415 (SSPSMRPDVSSPPSSSSTATTG) is disordered. Ser404 is modified (phosphoserine). Lys419 participates in a covalent cross-link: Glycyl lysine isopeptide (Lys-Gly) (interchain with G-Cter in ubiquitin). NR C4-type zinc fingers lie at residues 421–441 (CLVCSDEASGCHYGVLTCGSC) and 457–481 (CAGRNDCIIDKIRRKNCPACRYRKC). The nuclear receptor DNA-binding region spans 421-486 (CLVCSDEASG…RYRKCLQAGM (66 aa)). Residues Lys480, Lys492, Lys494, and Lys495 each carry the N6-acetyllysine modification. Residues 485-777 (GMNLEARKTK…NIKKLLFHQK (293 aa)) form an interaction with CLOCK region. A hinge region spans residues 487 to 523 (NLEARKTKKKIKGIQQATTGVSQETSENPANKTIVPA). An NR LBD domain is found at 524–758 (TLPQLTPTLV…FPEMLAEIIT (235 aa)). The interval 532–697 (LVSLLEVIEP…EIRMTYIKEL (166 aa)) is interaction with CRY1. A Glycyl lysine isopeptide (Lys-Gly) (interchain with G-Cter in SUMO) cross-link involves residue Lys703.

The protein belongs to the nuclear hormone receptor family. NR3 subfamily. Heteromultimeric cytoplasmic complex with HSP90AA1, HSPA1A/HSPA1B, and FKBP5 or another immunophilin such as PPID, STIP1, or the immunophilin homolog PPP5C. Upon ligand binding FKBP5 dissociates from the complex and FKBP4 takes its place, thereby linking the complex to dynein and mediating transport to the nucleus, where the complex dissociates. Probably forms a complex composed of chaperones HSP90 and HSP70, co-chaperones CDC37, PPP5C, TSC1 and client protein TSC2, CDK4, AKT, RAF1 and NR3C1; this complex does not contain co-chaperones STIP1/HOP and PTGES3/p23. Directly interacts with UNC45A. Binds to DNA as a homodimer, and as heterodimer with NR3C2 or the retinoid X receptor. Binds STAT5A and STAT5B homodimers and heterodimers. Interacts with NRIP1, POU2F1, POU2F2 and TRIM28. Interacts with several coactivator complexes, including the SMARCA4 complex, CREBBP/EP300, TADA2L (Ada complex) and p160 coactivators such as NCOA2 and NCOA6. Interaction with BAG1 inhibits transactivation. Interacts with HEXIM1 and TGFB1I1. Interacts with NCOA1. Interacts with NCOA3, SMARCA4, SMARCC1, SMARCD1, and SMARCE1. Interacts with CLOCK, CRY1 and CRY2 in a ligand-dependent fashion. Interacts with CIART. Interacts with RWDD3. Interacts with UBE2I/UBC9 and this interaction is enhanced in the presence of RWDD3. Interacts with GRIP1. Interacts with NR4A3 (via nuclear receptor DNA-binding domain), represses transcription activity of NR4A3 on the POMC promoter Nur response element (NurRE). Directly interacts with PNRC2 to attract and form a complex with UPF1 and DCP1A; the interaction leads to rapid mRNA degradation. Interacts with GSK3B. Interacts with FNIP1 and FNIP2. Interacts (via C-terminus) with HNRNPU (via C-terminus). Interacts with MCM3AP. Interacts (via domain NR LBD) with HSP90AA1 and HSP90AB1. In the absence of hormonal ligand, interacts with TACC1. Interacts (via NR LBD domain) with ZNF764 (via KRAB domain); the interaction regulates transcription factor activity of NR3C1 by directing its actions toward certain biologic pathways. Post-translationally, acetylation by CLOCK reduces its binding to glucocorticoid response elements and its transcriptional activity. In terms of processing, increased proteasome-mediated degradation in response to glucocorticoids. Phosphorylated in the absence of hormone; becomes hyperphosphorylated in the presence of glucocorticoid. The Ser-203, Ser-226 and Ser-404-phosphorylated forms are mainly cytoplasmic, and the Ser-211-phosphorylated form is nuclear. Phosphorylation at Ser-211 increases transcriptional activity. Phosphorylation at Ser-203, Ser-226 and Ser-404 decreases signaling capacity. Phosphorylation at Ser-404 may protect from glucocorticoid-induced apoptosis. Phosphorylation at Ser-203 and Ser-211 is not required in regulation of chromosome segregation. May be dephosphorylated by PPP5C, attenuates NR3C1 action. Post-translationally, ubiquitinated by UBR5, leading to its degradation: UBR5 specifically recognizes and binds ligand-bound NR3C1 when it is not associated with coactivators (NCOAs). In presence of NCOAs, the UBR5-degron is not accessible, preventing its ubiquitination and degradation. In terms of processing, sumoylation at Lys-277 and Lys-293 negatively regulates its transcriptional activity. Sumoylation at Lys-703 positively regulates its transcriptional activity in the presence of RWDD3. Sumoylation at Lys-277 and Lys-293 is dispensable whereas sumoylation at Lys-703 is critical for the stimulatory effect of RWDD3 on its transcriptional activity. Heat shock increases sumoylation in a RWDD3-dependent manner.

It localises to the cytoplasm. It is found in the nucleus. The protein localises to the mitochondrion. Its subcellular location is the cytoskeleton. The protein resides in the spindle. It localises to the microtubule organizing center. It is found in the centrosome. The protein localises to the chromosome. Its subcellular location is the nucleoplasm. Functionally, receptor for glucocorticoids (GC). Has a dual mode of action: as a transcription factor that binds to glucocorticoid response elements (GRE), both for nuclear and mitochondrial DNA, and as a modulator of other transcription factors. Affects inflammatory responses, cellular proliferation and differentiation in target tissues. Involved in chromatin remodeling. Plays a role in rapid mRNA degradation by binding to the 5' UTR of target mRNAs and interacting with PNRC2 in a ligand-dependent manner which recruits the RNA helicase UPF1 and the mRNA-decapping enzyme DCP1A, leading to RNA decay. Could act as a coactivator for STAT5-dependent transcription upon growth hormone (GH) stimulation and could reveal an essential role of hepatic GR in the control of body growth. Mediates glucocorticoid-induced apoptosis. Promotes accurate chromosome segregation during mitosis. May act as a tumor suppressor. May play a negative role in adipogenesis through the regulation of lipolytic and antilipogenic gene expression. This chain is Glucocorticoid receptor (NR3C1), found in Saimiri boliviensis boliviensis (Bolivian squirrel monkey).